The following is a 476-amino-acid chain: Aspartyl/glutamyl-tRNA(Asn/Gln) amidotransferase subunit B (476 aa).

It belongs to the GatB/GatE family. GatB subfamily. Heterotrimer of A, B and C subunits.

It carries out the reaction L-glutamyl-tRNA(Gln) + L-glutamine + ATP + H2O = L-glutaminyl-tRNA(Gln) + L-glutamate + ADP + phosphate + H(+). It catalyses the reaction L-aspartyl-tRNA(Asn) + L-glutamine + ATP + H2O = L-asparaginyl-tRNA(Asn) + L-glutamate + ADP + phosphate + 2 H(+). Functionally, allows the formation of correctly charged Asn-tRNA(Asn) or Gln-tRNA(Gln) through the transamidation of misacylated Asp-tRNA(Asn) or Glu-tRNA(Gln) in organisms which lack either or both of asparaginyl-tRNA or glutaminyl-tRNA synthetases. The reaction takes place in the presence of glutamine and ATP through an activated phospho-Asp-tRNA(Asn) or phospho-Glu-tRNA(Gln). The protein is Aspartyl/glutamyl-tRNA(Asn/Gln) amidotransferase subunit B of Oleidesulfovibrio alaskensis (strain ATCC BAA-1058 / DSM 17464 / G20) (Desulfovibrio alaskensis).